The following is a 354-amino-acid chain: MGALAGNPDAGLAVLADVSEDAAEKARHLVDSGAVELTVADVDDDLYAETVLHLDGHHARACIAGDHTNVFLVSRDDEVLESKERPAAGHVPPTAALLQGLSLAKIYDFATTVDIERIEFITEAERLNSALVDAGRDGSYGIGEGAAILGSIDRGMASDDLCTRMTAYTAAASDARMGGAPLPAMTNSGSGNQGIVATVPVTVAADYAGVDHERRVRALALSHAVALYAHAGLPVLSAFCAATTAAMGAAAGICLVLDGSYSAVERAVASMTGDVVGMVCDGAGCSCALKVSASANAAGRAALLSLAGRRVPGTNGLVHDDVDAAIRGIGRLGTEGMKQTDPEILSLMMAKQTV.

Belongs to the UPF0597 family.

The polypeptide is UPF0597 protein PPA0217 (Cutibacterium acnes (strain DSM 16379 / KPA171202) (Propionibacterium acnes)).